The following is a 97-amino-acid chain: Peptide Y (97 aa).

A signal peptide spans 1–28; the sequence is MANMLRSWMMLAALAVCLLVCLSSFADA. Y64 is modified (tyrosine amide). Residues 68–97 constitute a propeptide, C-terminal extension; the sequence is STPEQAVAWLLFGADSSQDAEPRLDYSDQW.

This sequence belongs to the NPY family.

The protein localises to the secreted. This is Peptide Y from Dicentrarchus labrax (European seabass).